A 78-amino-acid polypeptide reads, in one-letter code: UPF0335 protein RPR_04100 (78 aa).

The protein belongs to the UPF0335 family.

In Rickettsia peacockii (strain Rustic), this protein is UPF0335 protein RPR_04100.